The sequence spans 803 residues: H(+)/Cl(-) exchange transporter 7 (803 aa).

The tract at residues 1 to 46 (MANVSKKVSWSGRDRDDEEGAPLLRRTGQPDEETPLLNGAGPGARQ) is disordered. Over 1-124 (MANVSKKVSW…TAFRTVEIKR (124 aa)) the chain is Cytoplasmic. A Phosphoserine modification is found at Ser9. The next 2 helical transmembrane spans lie at 125–157 (WVIC…YRVI) and 172–195 (FSLL…VAFI). The Selectivity filter part_1 signature appears at 201–205 (GSGIP). Ser202 provides a ligand contact to chloride. Positions 204–211 (IPQIKCFL) form an intramembrane region, helical. Helical transmembrane passes span 221–239 (RLKT…VVGG) and 245–262 (EGPM…ISQG). Positions 243–247 (GKEGP) match the Selectivity filter part_2 motif. Intramembrane regions (helical) lie at residues 286-298 (FVSA…VSAA) and 302-310 (PVGGVLFSL). The next 5 helical transmembrane spans lie at 320-339 (FLTW…LNFV), 373-403 (IPVF…FRIR), 408-430 (PCLQ…FVLI), 485-505 (PMTL…TYGL), and 510-533 (GVFI…MSYL). The short motif at 510–514 (GVFIP) is the Selectivity filter part_3 element. Chloride is bound at residue Phe512. An intramembrane region (helical) is located at residues 543-557 (GKYALMGAAAQLGGI). The segment at residues 558-560 (VRM) is an intramembrane region (note=Loop between two helices). The segment at residues 561-572 (TLSLTVIMMEAT) is an intramembrane region (helical). The segment at residues 573–576 (SNVT) is an intramembrane region (note=Loop between two helices). Residues 577–595 (YGFPIMLVLMTAKIVGDVF) traverse the membrane as a helical segment. Topologically, residues 596-803 (IEGLYDMHIQ…GLEELSLAQT (208 aa)) are cytoplasmic. Tyr600 contributes to the chloride binding site. CBS domains are found at residues 629-693 (MSTP…VFVE) and 739-797 (MNPS…GLEE). Residues 656–658 (HNG) and 781–784 (TRKD) each bind ATP. Position 799 is a phosphoserine (Ser799).

It belongs to the chloride channel (TC 2.A.49) family. ClC-7/CLCN7 subfamily. Chloride channel 7 are heteromers of alpha (CLCN7) and beta (OSTM1) subunits. As to expression, brain, testis, muscle and kidney.

It is found in the lysosome membrane. The enzyme catalyses 2 chloride(in) + H(+)(out) = 2 chloride(out) + H(+)(in). Functionally, slowly voltage-gated channel mediating the exchange of chloride ions against protons. Functions as antiporter and contributes to the acidification of the lysosome lumen and may be involved in maintaining lysosomal pH. The CLC channel family contains both chloride channels and proton-coupled anion transporters that exchange chloride or another anion for protons. The presence of conserved gating glutamate residues is typical for family members that function as antiporters. The polypeptide is H(+)/Cl(-) exchange transporter 7 (Clcn7) (Rattus norvegicus (Rat)).